Here is a 107-residue protein sequence, read N- to C-terminus: UPF0145 protein MAB_3451c (107 aa).

The protein belongs to the UPF0145 family.

This is UPF0145 protein MAB_3451c from Mycobacteroides abscessus (strain ATCC 19977 / DSM 44196 / CCUG 20993 / CIP 104536 / JCM 13569 / NCTC 13031 / TMC 1543 / L948) (Mycobacterium abscessus).